The sequence spans 213 residues: Motile sperm domain-containing protein 1 (213 aa).

An MSP domain is found at 16–143 (PVFVFPTELI…KEHLTESLFF (128 aa)). Transmembrane regions (helical) follow at residues 159-179 (SLLT…PTLG) and 191-211 (LSVN…MAIL). Residues 205–208 (LITM) carry the Nuclear export signal motif.

The protein resides in the endoplasmic reticulum membrane. It localises to the golgi apparatus membrane. In terms of biological role, plays a role in differentiation and/or proliferation of mesenchymal stem cells. Proposed to be involved in epithelial-to-mesenchymal transition (EMT). However, another study suggests that it is not required for EMT or stem cell self-renewal and acts during later stages of differentiation. This Pongo abelii (Sumatran orangutan) protein is Motile sperm domain-containing protein 1 (MOSPD1).